Consider the following 106-residue polypeptide: BLOC-1-related complex subunit 7 (106 aa).

This sequence belongs to the BORCS7 family. In terms of assembly, component of the BLOC-one-related complex (BORC) which is composed of BLOC1S1, BLOC1S2, BORCS5, BORCS6, BORCS7, BORCS8, KXD1 and SNAPIN.

It localises to the lysosome membrane. As part of the BORC complex may play a role in lysosomes movement and localization at the cell periphery. Associated with the cytosolic face of lysosomes, the BORC complex may recruit ARL8B and couple lysosomes to microtubule plus-end-directed kinesin motor. In Homo sapiens (Human), this protein is BLOC-1-related complex subunit 7.